The following is a 360-amino-acid chain: Peptide chain release factor 1 (360 aa).

The residue at position 234 (glutamine 234) is an N5-methylglutamine.

Belongs to the prokaryotic/mitochondrial release factor family. In terms of processing, methylated by PrmC. Methylation increases the termination efficiency of RF1.

The protein resides in the cytoplasm. Peptide chain release factor 1 directs the termination of translation in response to the peptide chain termination codons UAG and UAA. This chain is Peptide chain release factor 1, found in Renibacterium salmoninarum (strain ATCC 33209 / DSM 20767 / JCM 11484 / NBRC 15589 / NCIMB 2235).